The following is a 291-amino-acid chain: tRNA dimethylallyltransferase (291 aa).

ATP is bound at residue 9–16 (GTTASGKT). Residue 11-16 (TASGKT) participates in substrate binding. The interval 34–37 (DSLC) is interaction with substrate tRNA.

This sequence belongs to the IPP transferase family. Monomer. Mg(2+) is required as a cofactor.

It catalyses the reaction adenosine(37) in tRNA + dimethylallyl diphosphate = N(6)-dimethylallyladenosine(37) in tRNA + diphosphate. In terms of biological role, catalyzes the transfer of a dimethylallyl group onto the adenine at position 37 in tRNAs that read codons beginning with uridine, leading to the formation of N6-(dimethylallyl)adenosine (i(6)A). This is tRNA dimethylallyltransferase from Campylobacter lari (strain RM2100 / D67 / ATCC BAA-1060).